Consider the following 313-residue polypeptide: ADP-L-glycero-D-manno-heptose-6-epimerase (313 aa).

Residues 10–11, 31–32, Arg-38, Lys-53, 75–79, and Asn-92 each bind NADP(+); these read FI, DD, and EGACS. The active-site Proton acceptor is the Tyr-139. An NADP(+)-binding site is contributed by Lys-143. Residue Asn-168 participates in substrate binding. NADP(+) is bound by residues Val-169 and Lys-177. The active-site Proton acceptor is Lys-177. Substrate-binding positions include Lys-179, His-186, 200–203, Arg-213, and Tyr-277; that span reads FEGW.

It belongs to the NAD(P)-dependent epimerase/dehydratase family. HldD subfamily. In terms of assembly, homopentamer. NADP(+) serves as cofactor.

It carries out the reaction ADP-D-glycero-beta-D-manno-heptose = ADP-L-glycero-beta-D-manno-heptose. It functions in the pathway nucleotide-sugar biosynthesis; ADP-L-glycero-beta-D-manno-heptose biosynthesis; ADP-L-glycero-beta-D-manno-heptose from D-glycero-beta-D-manno-heptose 7-phosphate: step 4/4. Catalyzes the interconversion between ADP-D-glycero-beta-D-manno-heptose and ADP-L-glycero-beta-D-manno-heptose via an epimerization at carbon 6 of the heptose. The protein is ADP-L-glycero-D-manno-heptose-6-epimerase of Marinobacter nauticus (strain ATCC 700491 / DSM 11845 / VT8) (Marinobacter aquaeolei).